Reading from the N-terminus, the 493-residue chain is Cytochrome P450 2E1 (493 aa).

Phenylalanine 298 to threonine 303 contacts substrate. Residue cysteine 437 participates in heme binding.

It belongs to the cytochrome P450 family. Interacts with chaperones HSP70 and HSP90; this interaction is required for initial targeting to mitochondria. Heme is required as a cofactor.

Its subcellular location is the endoplasmic reticulum membrane. It is found in the microsome membrane. It localises to the mitochondrion inner membrane. The enzyme catalyses an organic molecule + reduced [NADPH--hemoprotein reductase] + O2 = an alcohol + oxidized [NADPH--hemoprotein reductase] + H2O + H(+). The catalysed reaction is (5Z,8Z,11Z)-eicosatrienoate + reduced [NADPH--hemoprotein reductase] + O2 = 19-hydroxy-(5Z,8Z,11Z)-eicosatrienoate + oxidized [NADPH--hemoprotein reductase] + H2O + H(+). It catalyses the reaction (5Z,8Z,11Z,14Z,17Z)-eicosapentaenoate + reduced [NADPH--hemoprotein reductase] + O2 = 19-hydroxy-(5Z,8Z,11Z,14Z,17Z)-eicosapentaenoate + oxidized [NADPH--hemoprotein reductase] + H2O + H(+). It carries out the reaction (4Z,7Z,10Z,13Z,16Z,19Z)-docosahexaenoate + reduced [NADPH--hemoprotein reductase] + O2 = 21-hydroxy-(4Z,7Z,10Z,13Z,16Z,19Z)-docosahexaenoate + oxidized [NADPH--hemoprotein reductase] + H2O + H(+). The enzyme catalyses dodecanoate + reduced [NADPH--hemoprotein reductase] + O2 = 11-hydroxydodecanoate + oxidized [NADPH--hemoprotein reductase] + H2O + H(+). The catalysed reaction is tetradecanoate + reduced [NADPH--hemoprotein reductase] + O2 = 13-hydroxytetradecanoate + oxidized [NADPH--hemoprotein reductase] + H2O + H(+). It catalyses the reaction 4-nitrophenol + NADPH + O2 + H(+) = 4-nitrocatechol + NADP(+) + H2O. The protein operates within lipid metabolism; fatty acid metabolism. With respect to regulation, the omega-1 hydroxylase activity is stimulated by cytochrome b5. Its function is as follows. A cytochrome P450 monooxygenase involved in the metabolism of fatty acids. Mechanistically, uses molecular oxygen inserting one oxygen atom into a substrate, and reducing the second into a water molecule, with two electrons provided by NADPH via cytochrome P450 reductase (NADPH--hemoprotein reductase). Catalyzes the hydroxylation of carbon-hydrogen bonds. Hydroxylates fatty acids specifically at the omega-1 position displaying the highest catalytic activity for saturated fatty acids. May be involved in the oxidative metabolism of xenobiotics. This chain is Cytochrome P450 2E1 (CYP2E1), found in Macaca mulatta (Rhesus macaque).